A 152-amino-acid chain; its full sequence is MTTMLKTQVHVVVIYLLIQIAFSQVKPGSDLKWSTLKSVVTITNRLGDGSTLKLHCKSADDDLGLKILAPNGSWSFKFRPSIVPGVTLFFCHFTWPGQSKWFNIYDDDRDGVRMGIPCIYCIWDIGKYGPCRFSEIDDAFNICYDWNGNRRS.

An N-terminal signal peptide occupies residues 1–23; that stretch reads MTTMLKTQVHVVVIYLLIQIAFS. The N-linked (GlcNAc...) asparagine glycan is linked to asparagine 71.

This sequence belongs to the plant self-incompatibility (S1) protein family.

It localises to the secreted. This is S-protein homolog 4 from Arabidopsis thaliana (Mouse-ear cress).